We begin with the raw amino-acid sequence, 326 residues long: Transcription cofactor vestigial-like protein 3 (326 aa).

The segment at 57-80 (VTLPSKQEEEDEEEEEEEKDQPAE) is disordered. Lys62 is covalently cross-linked (Glycyl lysine isopeptide (Lys-Gly) (interchain with G-Cter in SUMO2)). Acidic residues predominate over residues 64–75 (EEEDEEEEEEEK). A Glycyl lysine isopeptide (Lys-Gly) (interchain with G-Cter in SUMO2) cross-link involves residue Lys126. Disordered regions lie at residues 175–203 (PPGT…PPAV) and 233–256 (HAHM…SALD). The segment covering 233–249 (HAHMHHRHRHHHHHHHP) has biased composition (basic residues).

It belongs to the vestigial family. As to expression, enriched in placenta.

The protein localises to the nucleus. Its function is as follows. May act as a specific coactivator for the mammalian TEFs. In Homo sapiens (Human), this protein is Transcription cofactor vestigial-like protein 3 (VGLL3).